The primary structure comprises 666 residues: UvrABC system protein B (666 aa).

Positions 25-412 (EQVQAGAPYQ…EEQIVEQVIR (388 aa)) constitute a Helicase ATP-binding domain. 38 to 45 (GATGTGKT) contributes to the ATP binding site. Residues 91–114 (YYDYYQPEAYIPVTDTYIAKTASI) carry the Beta-hairpin motif. Residues 429 to 595 (QVDDLLAEIQ…PIIKRSSNAI (167 aa)) form the Helicase C-terminal domain. Residues 626–661 (PNLITQLEAQMKEAAKNLEFEEAAQYRDRIKKLRER) enclose the UVR domain.

It belongs to the UvrB family. Forms a heterotetramer with UvrA during the search for lesions. Interacts with UvrC in an incision complex.

It localises to the cytoplasm. Functionally, the UvrABC repair system catalyzes the recognition and processing of DNA lesions. A damage recognition complex composed of 2 UvrA and 2 UvrB subunits scans DNA for abnormalities. Upon binding of the UvrA(2)B(2) complex to a putative damaged site, the DNA wraps around one UvrB monomer. DNA wrap is dependent on ATP binding by UvrB and probably causes local melting of the DNA helix, facilitating insertion of UvrB beta-hairpin between the DNA strands. Then UvrB probes one DNA strand for the presence of a lesion. If a lesion is found the UvrA subunits dissociate and the UvrB-DNA preincision complex is formed. This complex is subsequently bound by UvrC and the second UvrB is released. If no lesion is found, the DNA wraps around the other UvrB subunit that will check the other stand for damage. The polypeptide is UvrABC system protein B (Synechococcus sp. (strain ATCC 27144 / PCC 6301 / SAUG 1402/1) (Anacystis nidulans)).